We begin with the raw amino-acid sequence, 367 residues long: Bi-functional coumaroyl CoA and feruloyl CoA ortho-hydroxylase Diox4 (367 aa).

Residues 207 to 317 (IREPMLVGSR…RISVPLFVNP (111 aa)) form the Fe2OG dioxygenase domain. A 2-oxoglutarate-binding site is contributed by Y223. Residues H238, D240, and H298 each contribute to the Fe cation site. Residues R308 and S310 each coordinate 2-oxoglutarate.

It belongs to the iron/ascorbate-dependent oxidoreductase family. Requires L-ascorbate as cofactor. The cofactor is Fe(2+).

It catalyses the reaction (E)-4-coumaroyl-CoA + 2-oxoglutarate + O2 = (E)-2,4-dihydroxycinnamoyl-CoA + succinate + CO2. The catalysed reaction is (E)-feruloyl-CoA + 2-oxoglutarate + O2 = (E)-6-hydroxyferuloyl-CoA + succinate + CO2. Its pathway is phenylpropanoid metabolism. With respect to regulation, repressed by the competitive inhibitor psoralen, but not by umbelliferone, xanthotoxin, bergapten and isopimpinellin. In terms of biological role, 2-oxoglutarate (OG)- and Fe(II)-dependent dioxygenase (2OGD) involved in scopoletin and umbelliferone biosynthesis. Converts feruloyl CoA into 6'-hydroxyferuloyl CoA, and p-coumaroyl CoA into 2,4-dihydroxycinnamoyl-CoA. Has no activity with cinnamic acid, caffeic acid, p-coumaric acid, ferulic acid, cinnamoyl-CoA and caffeoyl-CoA. The protein is Bi-functional coumaroyl CoA and feruloyl CoA ortho-hydroxylase Diox4 of Ruta graveolens (Common rue).